A 331-amino-acid polypeptide reads, in one-letter code: L-lactate dehydrogenase A chain (331 aa).

NAD(+) contacts are provided by residues 29 to 57 (GMVG…MEDK) and Arg-98. Substrate is bound by residues Arg-105, Asn-137, and Arg-168. Residue Asn-137 coordinates NAD(+). The Proton acceptor role is filled by His-192. Thr-247 lines the substrate pocket.

The protein belongs to the LDH/MDH superfamily. LDH family. In terms of assembly, homotetramer.

It localises to the cytoplasm. The enzyme catalyses (S)-lactate + NAD(+) = pyruvate + NADH + H(+). It participates in fermentation; pyruvate fermentation to lactate; (S)-lactate from pyruvate: step 1/1. Interconverts simultaneously and stereospecifically pyruvate and lactate with concomitant interconversion of NADH and NAD(+). This Patagonotothen tessellata (Black southern cod) protein is L-lactate dehydrogenase A chain (ldha).